The chain runs to 118 residues: MICOS complex subunit MIC13 (118 aa).

Residues 1–7 are Mitochondrial matrix-facing; it reads MVARVWS. The helical transmembrane segment at 8–26 threads the bilayer; the sequence is LMRFLIKGSVAGGAVYLVY. At 27–118 the chain is on the mitochondrial intermembrane side; that stretch reads DQELLGPSDK…GWEYVKARTK (92 aa).

The protein belongs to the MICOS complex subunit Mic13 family. In terms of assembly, component of the mitochondrial contact site and cristae organizing system (MICOS) complex, composed of at least MICOS10/MIC10, CHCHD3/MIC19, CHCHD6/MIC25, APOO/MIC26, MICOS13/MIC13, APOOL/MIC27 and IMMT/MIC60. The complex associates with mitochondrial outer membrane proteins SAMM50, MTX1 and MTX2, and with HSPA9.

The protein resides in the mitochondrion inner membrane. Component of the MICOS complex, a large protein complex of the mitochondrial inner membrane that plays crucial roles in the maintenance of crista junctions, inner membrane architecture, and formation of contact sites to the outer membrane. Constituent of mature MICOS complex, it is required for the formation of cristae junction (CJ) and maintenance of cristae morphology. Required for the incorporation of MICOS10/MIC10 into the MICOS complex. This Macaca fascicularis (Crab-eating macaque) protein is MICOS complex subunit MIC13.